Reading from the N-terminus, the 347-residue chain is UPF0284 protein LS215_0030 (347 aa).

It belongs to the UPF0284 family.

The chain is UPF0284 protein LS215_0030 from Saccharolobus islandicus (strain L.S.2.15 / Lassen #1) (Sulfolobus islandicus).